The primary structure comprises 360 residues: Peptide chain release factor 1 (360 aa).

At Gln-236 the chain carries N5-methylglutamine. The disordered stretch occupies residues 288–308 (QDEQDAERKSTIGTGDRSERI). Basic and acidic residues predominate over residues 293–308 (AERKSTIGTGDRSERI).

Belongs to the prokaryotic/mitochondrial release factor family. Post-translationally, methylated by PrmC. Methylation increases the termination efficiency of RF1.

It is found in the cytoplasm. Peptide chain release factor 1 directs the termination of translation in response to the peptide chain termination codons UAG and UAA. The protein is Peptide chain release factor 1 of Streptococcus equi subsp. zooepidemicus (strain H70).